The sequence spans 1104 residues: Carbamoyl phosphate synthase large chain (1104 aa).

The carboxyphosphate synthetic domain stretch occupies residues 1–402 (MPRRTDLKSV…ALQKALRSTE (402 aa)). Arg-129, Arg-169, Gly-175, Gly-176, Glu-208, Ile-210, Glu-215, Gly-241, Val-242, His-243, Gln-285, and Glu-299 together coordinate ATP. Residues 133-328 (KGVVERCGAE…IAKIAARLAV (196 aa)) enclose the ATP-grasp 1 domain. Gln-285, Glu-299, and Asn-301 together coordinate Mg(2+). Mn(2+)-binding residues include Gln-285, Glu-299, and Asn-301. Residues 403-547 (KRGATFSWAG…YSSYDEEDET (145 aa)) are oligomerization domain. The segment at 548 to 948 (RPREKAAIVI…AFGKSQTAAY (401 aa)) is carbamoyl phosphate synthetic domain. One can recognise an ATP-grasp 2 domain in the interval 676-867 (GQVLERAGLV…LAKAAARLMA (192 aa)). ATP-binding residues include Arg-712, Arg-751, Leu-753, Glu-758, Gly-783, Ile-784, His-785, Ser-786, Gln-826, and Glu-838. Residues Gln-826, Glu-838, and Asn-840 each contribute to the Mg(2+) site. Residues Gln-826, Glu-838, and Asn-840 each coordinate Mn(2+). One can recognise an MGS-like domain in the interval 949 to 1099 (GGLPTAGTAF…QEHTARLNAA (151 aa)). The interval 949 to 1104 (GGLPTAGTAF…RLNAAWEGRA (156 aa)) is allosteric domain.

This sequence belongs to the CarB family. Composed of two chains; the small (or glutamine) chain promotes the hydrolysis of glutamine to ammonia, which is used by the large (or ammonia) chain to synthesize carbamoyl phosphate. Tetramer of heterodimers (alpha,beta)4. It depends on Mg(2+) as a cofactor. Requires Mn(2+) as cofactor.

It carries out the reaction hydrogencarbonate + L-glutamine + 2 ATP + H2O = carbamoyl phosphate + L-glutamate + 2 ADP + phosphate + 2 H(+). The enzyme catalyses hydrogencarbonate + NH4(+) + 2 ATP = carbamoyl phosphate + 2 ADP + phosphate + 2 H(+). It participates in amino-acid biosynthesis; L-arginine biosynthesis; carbamoyl phosphate from bicarbonate: step 1/1. The protein operates within pyrimidine metabolism; UMP biosynthesis via de novo pathway; (S)-dihydroorotate from bicarbonate: step 1/3. In terms of biological role, large subunit of the glutamine-dependent carbamoyl phosphate synthetase (CPSase). CPSase catalyzes the formation of carbamoyl phosphate from the ammonia moiety of glutamine, carbonate, and phosphate donated by ATP, constituting the first step of 2 biosynthetic pathways, one leading to arginine and/or urea and the other to pyrimidine nucleotides. The large subunit (synthetase) binds the substrates ammonia (free or transferred from glutamine from the small subunit), hydrogencarbonate and ATP and carries out an ATP-coupled ligase reaction, activating hydrogencarbonate by forming carboxy phosphate which reacts with ammonia to form carbamoyl phosphate. This is Carbamoyl phosphate synthase large chain from Kineococcus radiotolerans (strain ATCC BAA-149 / DSM 14245 / SRS30216).